We begin with the raw amino-acid sequence, 382 residues long: Ribosomal RNA large subunit methyltransferase G (382 aa).

The protein belongs to the methyltransferase superfamily. RlmG family.

The protein resides in the cytoplasm. The enzyme catalyses guanosine(1835) in 23S rRNA + S-adenosyl-L-methionine = N(2)-methylguanosine(1835) in 23S rRNA + S-adenosyl-L-homocysteine + H(+). In terms of biological role, specifically methylates the guanine in position 1835 (m2G1835) of 23S rRNA. The sequence is that of Ribosomal RNA large subunit methyltransferase G from Pseudoalteromonas translucida (strain TAC 125).